Here is a 275-residue protein sequence, read N- to C-terminus: Transmembrane protein 45B (275 aa).

7 helical membrane passes run 7 to 27 (HALPGSFFLIIGLCWSVKYPL), 47 to 67 (IVEAAIRTLFSVTGILAEQFV), 94 to 114 (LFFAVSGIVDMLTYLVSHVPL), 116 to 136 (VDRLVMAVAVFMEGFLFYYHV), 146 to 166 (IHSLLLYALFGGCVSISLEVI), 180 to 200 (LIILQGTWFWQIGFVLFPPFG), and 212 to 232 (LMFITMCFCWHYLAALSIVAV). Residues Ser-270 and Ser-272 each carry the phosphoserine modification.

Belongs to the TMEM45 family. (Microbial infection) Interacts with sindbis virus nsP1 and nsP4; these interactions lead to viral RNA replication inhibition. As to quaternary structure, (Microbial infection) Interacts with chikungunya virus nsP1 and nsP4; these interactions lead to viral RNA replication inhibition.

The protein resides in the endosome membrane. The protein localises to the lysosome membrane. It localises to the golgi apparatus. Its subcellular location is the trans-Golgi network membrane. In terms of biological role, plays a role in innate immunity. Mechanistically, promotes alphaviruses RNA degradation by interacting with the viral polymerase nsP4 and the mRNA-capping enzyme nsP1 and thereby interfering with the interaction between viral RNA and nsP1. This chain is Transmembrane protein 45B (TMEM45B), found in Homo sapiens (Human).